The following is a 139-amino-acid chain: MTAPTPEFRNKKQRKQQVKLRTPGKAIAKYVRMSPRKVRLVVDVIRGKSVSDAEAILRFLPKSASEPVAKVLNSAKHNALHNDEMLEDRLVITAAYVDAGPTLKRLIPRARGSANILKKRTSHITIIVGERNDTRGGKR.

The disordered stretch occupies residues 1-21 (MTAPTPEFRNKKQRKQQVKLR).

Belongs to the universal ribosomal protein uL22 family. Part of the 50S ribosomal subunit.

In terms of biological role, this protein binds specifically to 23S rRNA; its binding is stimulated by other ribosomal proteins, e.g. L4, L17, and L20. It is important during the early stages of 50S assembly. It makes multiple contacts with different domains of the 23S rRNA in the assembled 50S subunit and ribosome. Its function is as follows. The globular domain of the protein is located near the polypeptide exit tunnel on the outside of the subunit, while an extended beta-hairpin is found that lines the wall of the exit tunnel in the center of the 70S ribosome. This chain is Large ribosomal subunit protein uL22, found in Deinococcus deserti (strain DSM 17065 / CIP 109153 / LMG 22923 / VCD115).